A 150-amino-acid polypeptide reads, in one-letter code: 3-hydroxyacyl-[acyl-carrier-protein] dehydratase FabZ (150 aa).

His54 is an active-site residue.

Belongs to the thioester dehydratase family. FabZ subfamily.

It is found in the cytoplasm. The catalysed reaction is a (3R)-hydroxyacyl-[ACP] = a (2E)-enoyl-[ACP] + H2O. In terms of biological role, involved in unsaturated fatty acids biosynthesis. Catalyzes the dehydration of short chain beta-hydroxyacyl-ACPs and long chain saturated and unsaturated beta-hydroxyacyl-ACPs. The polypeptide is 3-hydroxyacyl-[acyl-carrier-protein] dehydratase FabZ (Vibrio vulnificus (strain CMCP6)).